A 288-amino-acid polypeptide reads, in one-letter code: MEIIMQTAQYIIELLKAVFLGIVEGITEWLPISSTGHLILVNEFLNLRQSKDFIDMFNIVIQLGAILAVMVIYFKRLNPFQPGKTAREVQLTWKLWLKVVIACIPSAFFGLLLDDWMEAHLSNFFVVAIMLVVYGIAFIWIEDRNRRVDPKVTDLARMSYKTAFYIGLFQVLSIIPGTSRSGATILGGIIVGTSRSVAADFTFFLGIPTMFGYSGLKAVKYFIDGNTLTGGQAAILLVASVTAFLVSLFVIRFLMNYIKKHDFTVFGKYRIVLGIIVLFYGAVKLIFG.

The next 8 helical transmembrane spans lie at 25–45 (GITE…NEFL), 53–73 (FIDM…MVIY), 93–113 (WKLW…GLLL), 121–141 (LSNF…FIWI), 171–191 (VLSI…GIIV), 196–216 (SVAA…YSGL), 231–251 (GQAA…LFVI), and 263–283 (FTVF…YGAV).

Belongs to the UppP family.

Its subcellular location is the cell membrane. It carries out the reaction di-trans,octa-cis-undecaprenyl diphosphate + H2O = di-trans,octa-cis-undecaprenyl phosphate + phosphate + H(+). Its function is as follows. Catalyzes the dephosphorylation of undecaprenyl diphosphate (UPP). Confers resistance to bacitracin. This is Undecaprenyl-diphosphatase from Streptococcus thermophilus (strain ATCC BAA-250 / LMG 18311).